The chain runs to 376 residues: Serpin B9 (376 aa).

Methionine 1 is subject to N-acetylmethionine.

Belongs to the serpin family. Ov-serpin subfamily.

The protein localises to the cytoplasm. Functionally, granzyme B inhibitor. This Homo sapiens (Human) protein is Serpin B9 (SERPINB9).